The primary structure comprises 213 residues: ATP phosphoribosyltransferase (213 aa).

The protein belongs to the ATP phosphoribosyltransferase family. Short subfamily. In terms of assembly, heteromultimer composed of HisG and HisZ subunits.

It localises to the cytoplasm. It carries out the reaction 1-(5-phospho-beta-D-ribosyl)-ATP + diphosphate = 5-phospho-alpha-D-ribose 1-diphosphate + ATP. Its pathway is amino-acid biosynthesis; L-histidine biosynthesis; L-histidine from 5-phospho-alpha-D-ribose 1-diphosphate: step 1/9. In terms of biological role, catalyzes the condensation of ATP and 5-phosphoribose 1-diphosphate to form N'-(5'-phosphoribosyl)-ATP (PR-ATP). Has a crucial role in the pathway because the rate of histidine biosynthesis seems to be controlled primarily by regulation of HisG enzymatic activity. The chain is ATP phosphoribosyltransferase (hisG) from Listeria innocua serovar 6a (strain ATCC BAA-680 / CLIP 11262).